Reading from the N-terminus, the 121-residue chain is MSLTNEQIVDAIAEKSLMEVMELVKAIEEKFGVSAAAPVAAAAAGPAAVVEEQTEFTVVLTSPGANKVAAIKAVRGVTGLGLKEAKDLTEAGGILKEGVSKDEAEKIKKEMTEAGATVEVK.

Belongs to the bacterial ribosomal protein bL12 family. As to quaternary structure, homodimer. Part of the ribosomal stalk of the 50S ribosomal subunit. Forms a multimeric L10(L12)X complex, where L10 forms an elongated spine to which 2 to 4 L12 dimers bind in a sequential fashion. Binds GTP-bound translation factors.

Its function is as follows. Forms part of the ribosomal stalk which helps the ribosome interact with GTP-bound translation factors. Is thus essential for accurate translation. This Xanthomonas campestris pv. campestris (strain B100) protein is Large ribosomal subunit protein bL12.